The sequence spans 83 residues: Large ribosomal subunit protein bL31B (83 aa).

Belongs to the bacterial ribosomal protein bL31 family. Type B subfamily. Part of the 50S ribosomal subunit.

Binds the 23S rRNA. The chain is Large ribosomal subunit protein bL31B from Lactobacillus delbrueckii subsp. bulgaricus (strain ATCC 11842 / DSM 20081 / BCRC 10696 / JCM 1002 / NBRC 13953 / NCIMB 11778 / NCTC 12712 / WDCM 00102 / Lb 14).